Consider the following 507-residue polypeptide: Maturase K (507 aa).

Belongs to the intron maturase 2 family. MatK subfamily.

The protein localises to the plastid. It is found in the chloroplast. In terms of biological role, usually encoded in the trnK tRNA gene intron. Probably assists in splicing its own and other chloroplast group II introns. This is Maturase K from Asimina triloba (Pawpaw).